The sequence spans 525 residues: Cytochrome P450 4V2 (525 aa).

A helical transmembrane segment spans residues 13–33; it reads LLLWGAASAVSLAGASLVLSL. Heme contacts are provided by E329 and C467.

Belongs to the cytochrome P450 family. Requires heme as cofactor.

Its subcellular location is the endoplasmic reticulum membrane. The catalysed reaction is dodecanoate + reduced [NADPH--hemoprotein reductase] + O2 = 12-hydroxydodecanoate + oxidized [NADPH--hemoprotein reductase] + H2O + H(+). It carries out the reaction tetradecanoate + reduced [NADPH--hemoprotein reductase] + O2 = 14-hydroxytetradecanoate + oxidized [NADPH--hemoprotein reductase] + H2O + H(+). It catalyses the reaction hexadecanoate + reduced [NADPH--hemoprotein reductase] + O2 = 16-hydroxyhexadecanoate + oxidized [NADPH--hemoprotein reductase] + H2O + H(+). The enzyme catalyses (5Z,8Z,11Z,14Z,17Z)-eicosapentaenoate + reduced [NADPH--hemoprotein reductase] + O2 = 20-hydroxy-(5Z,8Z,11Z,14Z,17Z)-eicosapentaenoate + oxidized [NADPH--hemoprotein reductase] + H2O + H(+). The catalysed reaction is (4Z,7Z,10Z,13Z,16Z,19Z)-docosahexaenoate + reduced [NADPH--hemoprotein reductase] + O2 = 22-hydroxy-(4Z,7Z,10Z,13Z,16Z,19Z)-docosahexaenoate + oxidized [NADPH--hemoprotein reductase] + H2O + H(+). Its pathway is lipid metabolism; fatty acid metabolism. Inhibited by N-hydroxy-N'-(4-n-butyl-2-methylphenyl formamidine)(HET0016) with an IC(50) of 38 nM. Functionally, a cytochrome P450 monooxygenase involved in fatty acid metabolism in the eye. Catalyzes the omega-hydroxylation of polyunsaturated fatty acids (PUFAs) docosahexaenoate (DHA) and its precursor eicosapentaenoate (EPA), and may contribute to the homeostasis of these retinal PUFAs. Omega hydroxylates saturated fatty acids such as laurate, myristate and palmitate, the catalytic efficiency decreasing in the following order: myristate &gt; laurate &gt; palmitate (C14&gt;C12&gt;C16). Mechanistically, uses molecular oxygen inserting one oxygen atom into a substrate, and reducing the second into a water molecule, with two electrons provided by NADPH via cytochrome P450 reductase (CPR; NADPH-ferrihemoprotein reductase). The polypeptide is Cytochrome P450 4V2 (CYP4V2) (Pongo abelii (Sumatran orangutan)).